The sequence spans 116 residues: Large ribosomal subunit protein bL20 (116 aa).

It belongs to the bacterial ribosomal protein bL20 family.

In terms of biological role, binds directly to 23S ribosomal RNA and is necessary for the in vitro assembly process of the 50S ribosomal subunit. It is not involved in the protein synthesizing functions of that subunit. This chain is Large ribosomal subunit protein bL20, found in Nitratiruptor sp. (strain SB155-2).